We begin with the raw amino-acid sequence, 399 residues long: Aspartate aminotransferase (399 aa).

Residues G42 and N179 each contribute to the L-aspartate site. An N6-(pyridoxal phosphate)lysine modification is found at K240. Residue R372 participates in L-aspartate binding.

This sequence belongs to the class-I pyridoxal-phosphate-dependent aminotransferase family. In terms of assembly, homodimer. Pyridoxal 5'-phosphate serves as cofactor.

It is found in the cytoplasm. The enzyme catalyses L-aspartate + 2-oxoglutarate = oxaloacetate + L-glutamate. In Sulfurisphaera tokodaii (strain DSM 16993 / JCM 10545 / NBRC 100140 / 7) (Sulfolobus tokodaii), this protein is Aspartate aminotransferase (aspC).